The chain runs to 951 residues: 2-oxoglutarate dehydrogenase E1 component (951 aa).

Positions 906-925 (RRRRSSPAEGNPTAHKQEQA) are disordered.

Belongs to the alpha-ketoglutarate dehydrogenase family. Homodimer. Part of the 2-oxoglutarate dehydrogenase (OGDH) complex composed of E1 (2-oxoglutarate dehydrogenase), E2 (dihydrolipoamide succinyltransferase) and E3 (dihydrolipoamide dehydrogenase); the complex contains multiple copies of the three enzymatic components (E1, E2 and E3). It depends on thiamine diphosphate as a cofactor.

It catalyses the reaction N(6)-[(R)-lipoyl]-L-lysyl-[protein] + 2-oxoglutarate + H(+) = N(6)-[(R)-S(8)-succinyldihydrolipoyl]-L-lysyl-[protein] + CO2. In terms of biological role, E1 component of the 2-oxoglutarate dehydrogenase (OGDH) complex which catalyzes the decarboxylation of 2-oxoglutarate, the first step in the conversion of 2-oxoglutarate to succinyl-CoA and CO(2). This Exiguobacterium sp. (strain ATCC BAA-1283 / AT1b) protein is 2-oxoglutarate dehydrogenase E1 component.